The sequence spans 409 residues: Beta-arrestin-2 (409 aa).

The residue at position 48 (Tyr-48) is a Phosphotyrosine. 2 positions are modified to hydroxyproline; by PHD2: Pro-176 and Pro-181. Residues 240–409 form an interaction with TRAF6 region; the sequence is ADICLFSTAQ…KDDDYDDQLC (170 aa). Phosphoserine is present on Ser-360. Residues 363–409 are interaction with AP2B1; sequence PETDVPVDTNLIEFDTNYATDDDIVFEDFARLRLKGMKDDDYDDQLC. The residue at position 382 (Thr-382) is a Phosphothreonine. A [DE]-X(1,2)-F-X-X-[FL]-X-X-X-R motif motif is present at residues 385-395; that stretch reads DIVFEDFARLR.

The protein belongs to the arrestin family. In terms of assembly, homooligomer; the self-association is mediated by InsP6-binding. Heterooligomer with ARRB1; the association is mediated by InsP6-binding. Interacts with ADRB2 and CHRM2. Interacts with PDE4A. Interacts with PDE4D. Interacts with MAPK10, MAPK1 and MAPK3. Interacts with DRD2. Interacts with FSHR. Interacts with CLTC. Interacts with HTR2C. Interacts with CCR5. Interacts with CXCR4. Interacts with SRC. Interacts with DUSP16; the interaction is interrupted by stimulation of AGTR1 and activation of MAPK10. Interacts with CHUK; the interaction is enhanced stimulation of ADRB2. Interacts with RELA. Interacts with MDM2; the interaction is enhanced by activation of GPCRs. Interacts with SLC9A5. Interacts with TRAF6. Interacts with IGF1R. Interacts with ENG. Interacts with KIR2DL1, KIR2DL3 and KIR2DL4. Interacts with LDLR. Interacts with AP2B1. Interacts with C5AR1. Interacts with RAF1. Interacts with MAP2K1. Interacts with MAPK1. Interacts with MAPK10; the interaction enhances MAPK10 activation by MAP3K5. Interacts with MAP2K4; the interaction is enhanced by presence of MAP3K5 and MAPK10. Interacts with MAP3K5. Interacts with AKT1. Interacts with IKBKB and MAP3K14. Interacts with SMO (activated). Interacts with GSK3A and GSK3B. Associates with protein phosphatase 2A (PP2A). Interacts with DHX8; the interaction is detected in the nucleus upon OR1D2 stimulation. Interacts with GAPDHS; the interaction is detected in the nucleus upon OR1D2 stimulation. Interacts with H2AFX; the interaction is detected in the nucleus upon OR1D2 stimulation. Interacts with KIF14; the interaction is detected in the nucleus upon OR1D2 stimulation. Interacts with RCC1; the interaction is detected in the nucleus upon OR1D2 stimulation. Interacts with CXCR4; the interaction is dependent on C-terminal phosphorylation of CXCR4 and allows activation of MAPK1 and MAPK3. Interacts with GPR143. Interacts with HCK and CXCR1 (phosphorylated). Interacts with ACKR3 and ACKR4. Interacts with ARRDC1; the interaction is direct. Interacts with GPR61, GPR62 and GPR135. Interacts (via NACHT and LRR domains) with NLRP3; this interaction is direct and inducible by omega-3 polyunsaturated fatty acids (PUFAs). Interacts with FFAR4 (via C-terminus); this interaction is stimulated by long-chain fatty acids (LCFAs). Interacts with GPR35. Interacts with GPR84. Interacts with TIGIT; this interaction inhibits the NF-kappa-B pathway. Interacts with TGFBR3. Phosphorylated at Thr-382 in the cytoplasm; probably dephosphorylated at the plasma membrane. The phosphorylation does not regulate internalization and recycling of ADRB2, interaction with clathrin or AP2B1. Post-translationally, the ubiquitination status appears to regulate the formation and trafficking of beta-arrestin-GPCR complexes and signaling. Ubiquitination appears to occur GPCR-specific. Ubiquitinated by MDM2; the ubiquitination is required for rapid internalization of ADRB2. Deubiquitinated by USP33; the deubiquitination leads to a dissociation of the beta-arrestin-GPCR complex. Stimulation of a class A GPCR, such as ADRB2, induces transient ubiquitination and subsequently promotes association with USP33. Stimulation of a class B GPCR promotes a sustained ubiquitination. Deubiquitinated by USP20; allowing USP20 to deubiquitinate TRAF6 leading to inhibition of NF-kappa-B signaling. In terms of processing, hydroxylation by PHD2 modulates the rate of internalization by slowing down recruitment to the plasma membrane and inhibiting subsequent co-internalization with class A receptors.

The protein localises to the cytoplasm. It is found in the nucleus. It localises to the cell membrane. The protein resides in the membrane. Its subcellular location is the clathrin-coated pit. The protein localises to the cytoplasmic vesicle. Its function is as follows. Functions in regulating agonist-mediated G-protein coupled receptor (GPCR) signaling by mediating both receptor desensitization and resensitization processes. During homologous desensitization, beta-arrestins bind to the GPRK-phosphorylated receptor and sterically preclude its coupling to the cognate G-protein; the binding appears to require additional receptor determinants exposed only in the active receptor conformation. The beta-arrestins target many receptors for internalization by acting as endocytic adapters (CLASPs, clathrin-associated sorting proteins) and recruiting the GPRCs to the adapter protein 2 complex 2 (AP-2) in clathrin-coated pits (CCPs). However, the extent of beta-arrestin involvement appears to vary significantly depending on the receptor, agonist and cell type. Internalized arrestin-receptor complexes traffic to intracellular endosomes, where they remain uncoupled from G-proteins. Two different modes of arrestin-mediated internalization occur. Class A receptors, like ADRB2, OPRM1, ENDRA, D1AR and ADRA1B dissociate from beta-arrestin at or near the plasma membrane and undergo rapid recycling. Class B receptors, like AVPR2, AGTR1, NTSR1, TRHR and TACR1 internalize as a complex with arrestin and traffic with it to endosomal vesicles, presumably as desensitized receptors, for extended periods of time. Receptor resensitization then requires that receptor-bound arrestin is removed so that the receptor can be dephosphorylated and returned to the plasma membrane. Mediates endocytosis of CCR7 following ligation of CCL19 but not CCL21. Involved in internalization of P2RY1, P2RY4, P2RY6 and P2RY11 and ATP-stimulated internalization of P2RY2. Involved in phosphorylation-dependent internalization of OPRD1 and subsequent recycling or degradation. Involved in ubiquitination of IGF1R. Beta-arrestins function as multivalent adapter proteins that can switch the GPCR from a G-protein signaling mode that transmits short-lived signals from the plasma membrane via small molecule second messengers and ion channels to a beta-arrestin signaling mode that transmits a distinct set of signals that are initiated as the receptor internalizes and transits the intracellular compartment. Acts as a signaling scaffold for MAPK pathways such as MAPK1/3 (ERK1/2) and MAPK10 (JNK3). ERK1/2 and JNK3 activated by the beta-arrestin scaffold are largely excluded from the nucleus and confined to cytoplasmic locations such as endocytic vesicles, also called beta-arrestin signalosomes. Acts as a signaling scaffold for the AKT1 pathway. GPCRs for which the beta-arrestin-mediated signaling relies on both ARRB1 and ARRB2 (codependent regulation) include ADRB2, F2RL1 and PTH1R. For some GPCRs the beta-arrestin-mediated signaling relies on either ARRB1 or ARRB2 and is inhibited by the other respective beta-arrestin form (reciprocal regulation). Increases ERK1/2 signaling in AGTR1- and AVPR2-mediated activation (reciprocal regulation). Involved in CCR7-mediated ERK1/2 signaling involving ligand CCL19. Is involved in type-1A angiotensin II receptor/AGTR1-mediated ERK activity. Is involved in type-1A angiotensin II receptor/AGTR1-mediated MAPK10 activity. Is involved in dopamine-stimulated AKT1 activity in the striatum by disrupting the association of AKT1 with its negative regulator PP2A. Involved in AGTR1-mediated chemotaxis. Appears to function as signaling scaffold involved in regulation of MIP-1-beta-stimulated CCR5-dependent chemotaxis. Involved in attenuation of NF-kappa-B-dependent transcription in response to GPCR or cytokine stimulation by interacting with and stabilizing CHUK. Suppresses UV-induced NF-kappa-B-dependent activation by interacting with CHUK. The function is promoted by stimulation of ADRB2 and dephosphorylation of ARRB2. Involved in p53/TP53-mediated apoptosis by regulating MDM2 and reducing the MDM2-mediated degradation of p53/TP53. May serve as nuclear messenger for GPCRs. Upon stimulation of OR1D2, may be involved in regulation of gene expression during the early processes of fertilization. Also involved in regulation of receptors other than GPCRs. Involved in endocytosis of TGFBR2 and TGFBR3 and down-regulates TGF-beta signaling such as NF-kappa-B activation. Involved in endocytosis of low-density lipoprotein receptor/LDLR. Involved in endocytosis of smoothened homolog/Smo, which also requires GRK2. Involved in endocytosis of SLC9A5. Involved in endocytosis of ENG and subsequent TGF-beta-mediated ERK activation and migration of epithelial cells. Involved in Toll-like receptor and IL-1 receptor signaling through the interaction with TRAF6 which prevents TRAF6 autoubiquitination and oligomerization required for activation of NF-kappa-B and JUN. Involved in insulin resistance by acting as insulin-induced signaling scaffold for SRC, AKT1 and INSR. Involved in regulation of inhibitory signaling of natural killer cells by recruiting PTPN6 and PTPN11 to KIR2DL1. Involved in IL8-mediated granule release in neutrophils. Involved in the internalization of the atypical chemokine receptor ACKR3. Acts as an adapter protein coupling FFAR4 receptor to specific downstream signaling pathways, as well as mediating receptor endocytosis. During the activation step of NLRP3 inflammasome, directly associates with NLRP3 leading to inhibition of pro-inflammatory cytokine release and inhibition of inflammation. This Homo sapiens (Human) protein is Beta-arrestin-2 (ARRB2).